Here is a 1035-residue protein sequence, read N- to C-terminus: Tyrosine-protein kinase-like otk (1035 aa).

An N-terminal signal peptide occupies residues 1 to 23 (MDMDVMMISMCILASTLMAPGWA). Ig-like C2-type domains follow at residues 24–109 (STSG…REAS), 110–199 (PPAK…RVMS), 251–365 (PEDL…APLN), 368–464 (PGLL…VSIN), and 469–559 (PKFS…VQLV). Topologically, residues 24-582 (STSGFLRVPQ…GGDGFLVTRA (559 aa)) are extracellular. 5 disulfide bridges follow: Cys-47/Cys-96, Cys-138/Cys-188, Cys-276/Cys-354, Cys-399/Cys-448, and Cys-491/Cys-543. Residues Asn-336, Asn-418, Asn-430, Asn-445, Asn-513, and Asn-525 are each glycosylated (N-linked (GlcNAc...) asparagine). A helical membrane pass occupies residues 583–603 (VLITMTVALAYIVLVVGLMLW). The Cytoplasmic segment spans residues 604 to 1035 (CRYRRQARKA…SKAMQSVAEK (432 aa)). Disordered stretches follow at residues 623-683 (AGGD…KSVY) and 721-775 (AQSD…KEEE). Positions 658-676 (KSNGDAQKSDDTACSQQSR) are enriched in polar residues. Ser-681 carries the post-translational modification Phosphoserine. A Protein kinase; inactive domain is found at 693 to 1029 (LSELLQIGRG…QLGSALSKAM (337 aa)). Over residues 723–734 (SDKDADTEKQHS) the composition is skewed to basic and acidic residues. The span at 766–775 (DDIEEIKEEE) shows a compositional bias: acidic residues.

It belongs to the protein kinase superfamily. Tyr protein kinase family. Insulin receptor subfamily. As to quaternary structure, interacts with plexA; component of a receptor complex that mediates the repulsive signaling in response to Semaphorin ligands.

It localises to the cell membrane. Functionally, acts as a calcium-dependent, homophilic cell adhesion molecule that regulates neural recognition during the development of the nervous system. Component of the repulsive Plexin signaling response to regulate motor axon guidance at the embryonic stage. Also component of a receptor complex that is required in the adult visual system to innervate the lamina layer; specific targeting of R1-R6 axons. This is Tyrosine-protein kinase-like otk from Drosophila persimilis (Fruit fly).